The primary structure comprises 397 residues: Homocysteine-responsive endoplasmic reticulum-resident ubiquitin-like domain member 2 protein (397 aa).

The Ubiquitin-like domain maps to 10-89 (VTLVIKAPNQ…HMVHLVCASR (80 aa)). Disordered regions lie at residues 87-166 (ASRS…MQGG) and 210-246 (APSPSLSAGPATQPVQPNEPAAPMGPNPAPEDRPANP). Composition is skewed to low complexity over residues 88 to 123 (SRSPPSSPTSDSHFSTTDSSSSTSDSAGPSLSSTPS) and 210 to 220 (APSPSLSAGPA). A helical transmembrane segment spans residues 293–313 (FVMVIGAMLLVYLHQAGWFPF). Positions 344–373 (DEGIEDDEGDSGEEGPDDPMNPGPHQPGFL) are disordered. The segment covering 345–360 (EGIEDDEGDSGEEGPD) has biased composition (acidic residues).

The protein resides in the membrane. Functionally, could be involved in the unfolded protein response (UPR) pathway. In Danio rerio (Zebrafish), this protein is Homocysteine-responsive endoplasmic reticulum-resident ubiquitin-like domain member 2 protein (herpud2).